A 361-amino-acid chain; its full sequence is Ribosomal RNA large subunit methyltransferase M (361 aa).

Residues serine 187, 220–223 (CPGG), aspartate 239, aspartate 259, and aspartate 276 each bind S-adenosyl-L-methionine. Lysine 305 functions as the Proton acceptor in the catalytic mechanism.

This sequence belongs to the class I-like SAM-binding methyltransferase superfamily. RNA methyltransferase RlmE family. RlmM subfamily. As to quaternary structure, monomer.

Its subcellular location is the cytoplasm. The enzyme catalyses cytidine(2498) in 23S rRNA + S-adenosyl-L-methionine = 2'-O-methylcytidine(2498) in 23S rRNA + S-adenosyl-L-homocysteine + H(+). Catalyzes the 2'-O-methylation at nucleotide C2498 in 23S rRNA. The chain is Ribosomal RNA large subunit methyltransferase M from Shewanella baltica (strain OS185).